Here is a 259-residue protein sequence, read N- to C-terminus: Ribosomal RNA small subunit methyltransferase A (259 aa).

Asn-13, Leu-15, Gly-40, Glu-61, Asp-85, and Asn-103 together coordinate S-adenosyl-L-methionine.

The protein belongs to the class I-like SAM-binding methyltransferase superfamily. rRNA adenine N(6)-methyltransferase family. RsmA subfamily.

The protein localises to the cytoplasm. The enzyme catalyses adenosine(1518)/adenosine(1519) in 16S rRNA + 4 S-adenosyl-L-methionine = N(6)-dimethyladenosine(1518)/N(6)-dimethyladenosine(1519) in 16S rRNA + 4 S-adenosyl-L-homocysteine + 4 H(+). Specifically dimethylates two adjacent adenosines (A1518 and A1519) in the loop of a conserved hairpin near the 3'-end of 16S rRNA in the 30S particle. May play a critical role in biogenesis of 30S subunits. In Neisseria gonorrhoeae (strain NCCP11945), this protein is Ribosomal RNA small subunit methyltransferase A.